Reading from the N-terminus, the 262-residue chain is ATP synthase subunit a (262 aa).

The next 7 helical transmembrane spans lie at 30–50 (ITSLTNIAILFIIGLLVLTIF), 64–84 (WNIVLETWVASILGIVKDQIG), 91–111 (LIYFPLIFTFFSFVFISNILG), 123–143 (ISVTLGLSIAIMIGVTLIGFS), 149–169 (FFSLFVPKGTPLALVPLLVLI), 195–215 (LFGVISALSVSACIAVSSLLL), and 220–240 (ITLPLAVLVVLYGLELLVALL).

Belongs to the ATPase A chain family. As to quaternary structure, F-type ATPases have 2 components, CF(1) - the catalytic core - and CF(0) - the membrane proton channel. CF(1) has five subunits: alpha(3), beta(3), gamma(1), delta(1), epsilon(1). CF(0) has three main subunits: a, b and c.

The protein resides in the mitochondrion inner membrane. Its function is as follows. Mitochondrial membrane ATP synthase (F(1)F(0) ATP synthase or Complex V) produces ATP from ADP in the presence of a proton gradient across the membrane which is generated by electron transport complexes of the respiratory chain. F-type ATPases consist of two structural domains, F(1) - containing the extramembraneous catalytic core and F(0) - containing the membrane proton channel, linked together by a central stalk and a peripheral stalk. During catalysis, ATP synthesis in the catalytic domain of F(1) is coupled via a rotary mechanism of the central stalk subunits to proton translocation. Key component of the proton channel; it may play a direct role in the translocation of protons across the membrane. In Allomyces macrogynus, this protein is ATP synthase subunit a (ATP6).